The sequence spans 414 residues: ORC1-type DNA replication protein 1 (414 aa).

Residues 70–74 (TGKTA), Tyr-213, and Arg-225 contribute to the ATP site.

This sequence belongs to the CDC6/cdc18 family.

Involved in regulation of DNA replication. The chain is ORC1-type DNA replication protein 1 (cdc6-1) from Methanosarcina acetivorans (strain ATCC 35395 / DSM 2834 / JCM 12185 / C2A).